The following is a 236-amino-acid chain: SPbeta prophage-derived uncharacterized lipoprotein YokB (236 aa).

The signal sequence occupies residues 1-19; it reads MNIRFSMLVCVSFIFFTGG. Residue Cys20 is the site of N-palmitoyl cysteine attachment. Residue Cys20 is the site of S-diacylglycerol cysteine attachment. Disordered stretches follow at residues 23–59 and 204–236; these read SSANSNDGSKNKNESKEESSEEGVKENDNKLADTPNM and VKKVSPEEEKREEKKREETMKSIYGEEHIKDNK. Residues 31–53 are compositionally biased toward basic and acidic residues; that stretch reads SKNKNESKEESSEEGVKENDNKL.

The protein localises to the cell membrane. The chain is SPbeta prophage-derived uncharacterized lipoprotein YokB (yokB) from Bacillus subtilis (strain 168).